Here is a 1071-residue protein sequence, read N- to C-terminus: ATP-dependent helicase/deoxyribonuclease subunit B (1071 aa).

Belongs to the helicase family. AddB/RexB type 2 subfamily. As to quaternary structure, heterodimer of AddA and RexB. Mg(2+) is required as a cofactor.

Its function is as follows. The heterodimer acts as both an ATP-dependent DNA helicase and an ATP-dependent, dual-direction single-stranded exonuclease. Recognizes the chi site generating a DNA molecule suitable for the initiation of homologous recombination. This subunit has 5' -&gt; 3' nuclease activity but not helicase activity. The protein is ATP-dependent helicase/deoxyribonuclease subunit B of Streptococcus pyogenes serotype M28 (strain MGAS6180).